Reading from the N-terminus, the 207-residue chain is Guanylate kinase (207 aa).

One can recognise a Guanylate kinase-like domain in the interval 3–181 (GQLFVICGPS…AVEMVVSIVR (179 aa)). Residue 10–17 (GPSGAGKT) participates in ATP binding.

It belongs to the guanylate kinase family.

It is found in the cytoplasm. It catalyses the reaction GMP + ATP = GDP + ADP. Functionally, essential for recycling GMP and indirectly, cGMP. The protein is Guanylate kinase (gmk) of Thermotoga maritima (strain ATCC 43589 / DSM 3109 / JCM 10099 / NBRC 100826 / MSB8).